The primary structure comprises 110 residues: DNA-directed RNA polymerase subunit omega (110 aa).

The protein belongs to the RNA polymerase subunit omega family. As to quaternary structure, the RNAP catalytic core consists of 2 alpha, 1 beta, 1 beta' and 1 omega subunit. When a sigma factor is associated with the core the holoenzyme is formed, which can initiate transcription.

It carries out the reaction RNA(n) + a ribonucleoside 5'-triphosphate = RNA(n+1) + diphosphate. In terms of biological role, promotes RNA polymerase assembly. Latches the N- and C-terminal regions of the beta' subunit thereby facilitating its interaction with the beta and alpha subunits. The polypeptide is DNA-directed RNA polymerase subunit omega (Vesicomyosocius okutanii subsp. Calyptogena okutanii (strain HA)).